A 177-amino-acid polypeptide reads, in one-letter code: ATP synthase subunit delta (177 aa).

Belongs to the ATPase delta chain family. F-type ATPases have 2 components, F(1) - the catalytic core - and F(0) - the membrane proton channel. F(1) has five subunits: alpha(3), beta(3), gamma(1), delta(1), epsilon(1). CF(0) has four main subunits: a(1), b(1), b'(1) and c(10-14). The alpha and beta chains form an alternating ring which encloses part of the gamma chain. F(1) is attached to F(0) by a central stalk formed by the gamma and epsilon chains, while a peripheral stalk is formed by the delta, b and b' chains.

It localises to the cell inner membrane. F(1)F(0) ATP synthase produces ATP from ADP in the presence of a proton or sodium gradient. F-type ATPases consist of two structural domains, F(1) containing the extramembraneous catalytic core and F(0) containing the membrane proton channel, linked together by a central stalk and a peripheral stalk. During catalysis, ATP synthesis in the catalytic domain of F(1) is coupled via a rotary mechanism of the central stalk subunits to proton translocation. In terms of biological role, this protein is part of the stalk that links CF(0) to CF(1). It either transmits conformational changes from CF(0) to CF(1) or is implicated in proton conduction. This is ATP synthase subunit delta from Methylibium petroleiphilum (strain ATCC BAA-1232 / LMG 22953 / PM1).